We begin with the raw amino-acid sequence, 217 residues long: Ras-related protein Rab-19 (217 aa).

Residues serine 26, valine 28, glycine 29, lysine 30, threonine 31, cysteine 32, tyrosine 42, glutamate 44, and threonine 49 each contribute to the GTP site. Threonine 31 serves as a coordination point for Mg(2+). A Switch 1 motif is present at residues 39–54 (SGVYMEAQQNTIGVDF). Mg(2+) contacts are provided by threonine 49 and aspartate 72. A Switch 2 motif is present at residues 74–89 (AGQERFRTITQSYYRS). GTP-binding residues include glycine 75, asparagine 130, lysine 131, aspartate 133, serine 161, alanine 162, and lysine 163. 2 S-geranylgeranyl cysteine lipidation sites follow: cysteine 215 and cysteine 217. Cysteine 217 is modified (cysteine methyl ester).

Belongs to the small GTPase superfamily. Rab family. Mg(2+) serves as cofactor.

The protein localises to the cell membrane. It carries out the reaction GTP + H2O = GDP + phosphate + H(+). Its activity is regulated as follows. Regulated by guanine nucleotide exchange factors (GEFs) which promote the exchange of bound GDP for free GTP. Regulated by GTPase activating proteins (GAPs) which increase the GTP hydrolysis activity. Inhibited by GDP dissociation inhibitors (GDIs). In terms of biological role, the small GTPases Rab are key regulators of intracellular membrane trafficking, from the formation of transport vesicles to their fusion with membranes. Rabs cycle between an inactive GDP-bound form and an active GTP-bound form that is able to recruit to membranes different set of downstream effectors directly responsible for vesicle formation, movement, tethering and fusion. The protein is Ras-related protein Rab-19 (RAB19) of Bos taurus (Bovine).